The sequence spans 421 residues: Protein OS-9 homolog (421 aa).

Positions Met1 to Thr26 are cleaved as a signal peptide. The MRH domain occupies Glu99–Leu220. Residue Trp115 participates in a mannooligosaccharide derivative binding. An N-linked (GlcNAc...) asparagine glycan is attached at Asn125. 2 disulfide bridges follow: Cys173-Cys206 and Cys188-Cys218. A mannooligosaccharide derivative contacts are provided by Arg180, Glu202, and Tyr208. Residues Asn271 and Asn332 are each glycosylated (N-linked (GlcNAc...) asparagine). Positions Gly375 to Glu394 are enriched in acidic residues. The interval Gly375–Ala403 is disordered.

The protein belongs to the OS-9 family. Interacts with missfolded ER lumenal proteins.

The protein resides in the endoplasmic reticulum membrane. Functionally, lectin involved in the quality control of the secretory pathway. As a member of the endoplasmic reticulum-associated degradation lumenal (ERAD-L) surveillance system, targets misfolded endoplasmic reticulum lumenal glycoproteins for degradation. The chain is Protein OS-9 homolog (YOS9) from Eremothecium gossypii (strain ATCC 10895 / CBS 109.51 / FGSC 9923 / NRRL Y-1056) (Yeast).